A 143-amino-acid polypeptide reads, in one-letter code: Phospholipase A2 isozymes PA3A/PA3B/PA5 (143 aa).

Residues W10, G12, and G14 each contribute to the Ca(2+) site. Disulfide bonds link C11–C33, C32–C72, and C39–C65. Residue H36 is part of the active site. A Ca(2+)-binding site is contributed by D37.

It belongs to the phospholipase A2 family. Group III subfamily. Requires Ca(2+) as cofactor. In terms of tissue distribution, expressed by the venom gland.

It localises to the secreted. The catalysed reaction is a 1,2-diacyl-sn-glycero-3-phosphocholine + H2O = a 1-acyl-sn-glycero-3-phosphocholine + a fatty acid + H(+). In terms of biological role, PLA2 catalyzes the calcium-dependent hydrolysis of the 2-acyl groups in 3-sn-phosphoglycerides. This is Phospholipase A2 isozymes PA3A/PA3B/PA5 from Heloderma suspectum (Gila monster).